We begin with the raw amino-acid sequence, 940 residues long: AP-2 complex subunit alpha (940 aa).

A phosphoserine mark is found at S632 and S634. Residues 651–662 (SHSKLNNSNANT) are compositionally biased toward polar residues. A disordered region spans residues 651–679 (SHSKLNNSNANTDLLGLSTPPSNNIGSGS). Low complexity predominate over residues 668–679 (STPPSNNIGSGS).

Belongs to the adaptor complexes large subunit family. Adaptor protein complex 2 (AP-2) is a heterotetramer composed of two large adaptins (alpha-type and beta-type subunits), a medium adaptin (mu-type subunit AP50) and a small adaptin (sigma-type subunit AP17). Expressed in the Garland cells, imaginal disks, adult midgut precursors, the antenno-maxillary complex, the endoderm, the fat bodies, and the visceral mesoderm and cells of the CNS and PNS including neuroblasts, the presumptive stomatogastric nervous system, and the lateral chordotonal sense organs.

It is found in the cell membrane. Its subcellular location is the membrane. The protein resides in the coated pit. Functionally, adaptins are components of the adapter complexes which link clathrin to receptors in coated vesicles. Clathrin-associated protein complexes are believed to interact with the cytoplasmic tails of membrane proteins, leading to their selection and concentration. AP-2alpha is a subunit of the plasma membrane adapter. The protein is AP-2 complex subunit alpha (AP-2alpha) of Drosophila melanogaster (Fruit fly).